The chain runs to 334 residues: Methylthioribose-1-phosphate isomerase (334 aa).

Residues R44 to A46, R87, and Q192 each bind substrate. D233 acts as the Proton donor in catalysis. N243–K244 contacts substrate.

The protein belongs to the eIF-2B alpha/beta/delta subunits family. MtnA subfamily.

It catalyses the reaction 5-(methylsulfanyl)-alpha-D-ribose 1-phosphate = 5-(methylsulfanyl)-D-ribulose 1-phosphate. Its pathway is amino-acid biosynthesis; L-methionine biosynthesis via salvage pathway; L-methionine from S-methyl-5-thio-alpha-D-ribose 1-phosphate: step 1/6. Its function is as follows. Catalyzes the interconversion of methylthioribose-1-phosphate (MTR-1-P) into methylthioribulose-1-phosphate (MTRu-1-P). This chain is Methylthioribose-1-phosphate isomerase, found in Dehalococcoides mccartyi (strain ATCC BAA-2266 / KCTC 15142 / 195) (Dehalococcoides ethenogenes (strain 195)).